Consider the following 269-residue polypeptide: Histone doublet H2B-H2A (269 aa).

A histone fold region spans residues 1-168; it reads MATQKETTRK…LAGNAARDSK (168 aa). Residues 210–249 form a disordered region; it reads RKKARKTTEKEASSPKKKAAPKKKKAASKQKKSLSDKELA. Positions 224 to 241 are enriched in basic residues; the sequence is PKKKAAPKKKKAASKQKK.

The protein localises to the host nucleus. It is found in the host cytoplasm. It localises to the virion. Its function is as follows. Histone-like protein that is recruited to viral factories during viral replication and participates in viral DNA packaging and virion production probably by forming unstable nucleosome-like particles. May compact the viral DNA. The protein is Histone doublet H2B-H2A of Melbournevirus (MelV).